The following is a 444-amino-acid chain: C4-dicarboxylate transport protein (444 aa).

9 helical membrane-spanning segments follow: residues 15–35 (VIVA…FGVA), 46–66 (LIKM…IAGM), 78–98 (YALL…LIVV), 143–163 (IVGA…VIFG), 199–219 (PIGA…GSLV), 224–244 (LMIC…GGIA), 291–311 (VVGL…AIYL), 332–352 (ITLL…TGSG), and 354–374 (IVLA…LALI). The segment at 422–444 (GIADTRPEDDLGVAEGPTPSNVK) is disordered.

It belongs to the dicarboxylate/amino acid:cation symporter (DAACS) (TC 2.A.23) family.

Its subcellular location is the cell inner membrane. Responsible for the transport of dicarboxylates such as succinate, fumarate, and malate from the periplasm across the membrane. The polypeptide is C4-dicarboxylate transport protein (Pseudomonas fluorescens (strain Pf0-1)).